The following is a 373-amino-acid chain: Erythronate-4-phosphate dehydrogenase (373 aa).

Residues S45 and T67 each coordinate substrate. NAD(+)-binding positions include D147, 207–209 (ASR), and D233. Residue R209 is part of the active site. Residue E238 is part of the active site. H255 (proton donor) is an active-site residue. Residue G258 coordinates NAD(+).

This sequence belongs to the D-isomer specific 2-hydroxyacid dehydrogenase family. PdxB subfamily. As to quaternary structure, homodimer.

The protein localises to the cytoplasm. It carries out the reaction 4-phospho-D-erythronate + NAD(+) = (R)-3-hydroxy-2-oxo-4-phosphooxybutanoate + NADH + H(+). Its pathway is cofactor biosynthesis; pyridoxine 5'-phosphate biosynthesis; pyridoxine 5'-phosphate from D-erythrose 4-phosphate: step 2/5. In terms of biological role, catalyzes the oxidation of erythronate-4-phosphate to 3-hydroxy-2-oxo-4-phosphonooxybutanoate. The protein is Erythronate-4-phosphate dehydrogenase of Pseudoalteromonas translucida (strain TAC 125).